The primary structure comprises 256 residues: Small ribosomal subunit protein eS1A (256 aa).

A2 is modified (N-acetylalanine; partial).

It belongs to the eukaryotic ribosomal protein eS1 family. As to quaternary structure, component of the small ribosomal subunit. Mature ribosomes consist of a small (40S) and a large (60S) subunit. The 40S subunit contains about 33 different proteins and 1 molecule of RNA (18S). The 60S subunit contains about 49 different proteins and 3 molecules of RNA (25S, 5.8S and 5S).

The protein localises to the cytoplasm. In Debaryomyces hansenii (strain ATCC 36239 / CBS 767 / BCRC 21394 / JCM 1990 / NBRC 0083 / IGC 2968) (Yeast), this protein is Small ribosomal subunit protein eS1A.